A 142-amino-acid polypeptide reads, in one-letter code: Small ribosomal subunit protein bS6 (142 aa).

The segment at 103–142 (KAAESREQRAPRGEDRPARVVADDVDDSDDDTDDEDSNDE) is disordered. Positions 105–124 (AESREQRAPRGEDRPARVVA) are enriched in basic and acidic residues. Acidic residues predominate over residues 125 to 142 (DDVDDSDDDTDDEDSNDE).

This sequence belongs to the bacterial ribosomal protein bS6 family.

Binds together with bS18 to 16S ribosomal RNA. The sequence is that of Small ribosomal subunit protein bS6 from Hahella chejuensis (strain KCTC 2396).